Here is a 577-residue protein sequence, read N- to C-terminus: Adenine deaminase (577 aa).

Belongs to the metallo-dependent hydrolases superfamily. Adenine deaminase family. Requires Mn(2+) as cofactor.

It carries out the reaction adenine + H2O + H(+) = hypoxanthine + NH4(+). This Kosmotoga olearia (strain ATCC BAA-1733 / DSM 21960 / TBF 19.5.1) protein is Adenine deaminase.